The following is a 201-amino-acid chain: Glycolipid transfer protein (201 aa).

The glycolipid transfer protein homology domain stretch occupies residues 28 to 168 (IATTQFLEAC…KDFYAKLGDD (141 aa)).

In terms of biological role, cargo transport protein that plays a key role in transport and secretion of liamocins, glycolipids (also called heavy oils) composed of a single mannitol or arabitol headgroup linked to either three, four or even six 3,5-dihydroxydecanoic ester tail-groups. This Aureobasidium melanogenum (Aureobasidium pullulans var. melanogenum) protein is Glycolipid transfer protein.